The sequence spans 409 residues: Pentatricopeptide repeat-containing protein At1g01970 (409 aa).

6 PPR repeats span residues Asn-164–Ile-198, Asp-199–Leu-233, Asp-234–Ala-268, Gly-269–Pro-303, Asp-304–Ala-338, and Thr-339–Leu-373.

The protein belongs to the PPR family. P subfamily.

The protein is Pentatricopeptide repeat-containing protein At1g01970 of Arabidopsis thaliana (Mouse-ear cress).